Consider the following 513-residue polypeptide: ATP synthase subunit alpha (513 aa).

ATP is bound at residue 169-176 (GDRQTGKT).

It belongs to the ATPase alpha/beta chains family. F-type ATPases have 2 components, CF(1) - the catalytic core - and CF(0) - the membrane proton channel. CF(1) has five subunits: alpha(3), beta(3), gamma(1), delta(1), epsilon(1). CF(0) has three main subunits: a(1), b(2) and c(9-12). The alpha and beta chains form an alternating ring which encloses part of the gamma chain. CF(1) is attached to CF(0) by a central stalk formed by the gamma and epsilon chains, while a peripheral stalk is formed by the delta and b chains.

Its subcellular location is the cell inner membrane. The enzyme catalyses ATP + H2O + 4 H(+)(in) = ADP + phosphate + 5 H(+)(out). Functionally, produces ATP from ADP in the presence of a proton gradient across the membrane. The alpha chain is a regulatory subunit. The polypeptide is ATP synthase subunit alpha (Thioalkalivibrio sulfidiphilus (strain HL-EbGR7)).